A 763-amino-acid polypeptide reads, in one-letter code: U3 small nucleolar RNA-associated protein 25 homolog (763 aa).

The segment at M1–D164 is disordered. Promotes p53/TP53 degradation regions lie at residues M1 to T190 and V580 to E642. Position 10 is a phosphoserine (S10). A compositionally biased stretch (basic and acidic residues) spans R25–K43. A phosphoserine mark is found at S52, S60, and S64. Basic and acidic residues predominate over residues D54–S70. The span at E84 to G119 shows a compositional bias: acidic residues. Residues L643–Y704 are represses p53/TP53 degradation.

The protein belongs to the UTP25 family. As to quaternary structure, interacts with CAPN3; the interaction is required for CAPN3 translocation to the nucleolus. Post-translationally, phosphorylated. Phosphorylation is required to promote p53/TP53 degradation in the nucleolus which promotes cell cycle progression and liver development.

It localises to the nucleus. The protein localises to the nucleolus. Its function is as follows. Component of the ribosomal small subunit processome for the biogenesis of ribosomes, functions in pre-ribosomal RNA (pre-rRNA) processing. Essential for embryonic development in part through the regulation of p53 pathway. Controls the expansion growth of digestive organs and liver. Also involved in the sympathetic neuronal development. Mediates, with CAPN3, the proteasome-independent degradation of p53/TP53. The sequence is that of U3 small nucleolar RNA-associated protein 25 homolog from Rattus norvegicus (Rat).